We begin with the raw amino-acid sequence, 434 residues long: Probable exopolygalacturonase X (434 aa).

The first 23 residues, 1–23 (MKFLHTVAQTATLLLSLGASVEG), serve as a signal peptide directing secretion. The interval 35–54 (HHPFRPLPASTPRTKTCHVR) is disordered. Residues N113, N129, and N199 are each glycosylated (N-linked (GlcNAc...) asparagine). Residues 231–252 (SSNIVIQNSVVNNGDDCVSFKP) form a PbH1 1 repeat. D245 acts as the Proton donor in catalysis. An intrachain disulfide couples C247 to C264. N-linked (GlcNAc...) asparagine glycans are attached at residues N253 and N265. The stretch at 254 to 274 (STDILVQNMHCNGSHGISVGS) is one PbH1 2 repeat. H268 is an active-site residue. N-linked (GlcNAc...) asparagine glycosylation is found at N292, N297, N329, N354, and N364. One copy of the PbH1 3 repeat lies at 327 to 348 (VSNITYDRMYIENVDWAIEVTQ). A PbH1 4 repeat occupies 362–394 (PSNLTISDVHIKNMWGTTSGKRDPNVGTIVCSS). Residues C392 and C398 are joined by a disulfide bond. N407 and N430 each carry an N-linked (GlcNAc...) asparagine glycan.

It belongs to the glycosyl hydrolase 28 family.

The protein localises to the secreted. It catalyses the reaction [(1-&gt;4)-alpha-D-galacturonosyl](n) + H2O = alpha-D-galacturonate + [(1-&gt;4)-alpha-D-galacturonosyl](n-1). Its function is as follows. Specific in hydrolyzing the terminal glycosidic bond of polygalacturonic acid and oligogalacturonates. The chain is Probable exopolygalacturonase X (pgaX) from Aspergillus terreus (strain NIH 2624 / FGSC A1156).